The chain runs to 413 residues: Tryptophan synthase beta chain (413 aa).

K106 carries the N6-(pyridoxal phosphate)lysine modification.

This sequence belongs to the TrpB family. In terms of assembly, tetramer of two alpha and two beta chains. Requires pyridoxal 5'-phosphate as cofactor.

The catalysed reaction is (1S,2R)-1-C-(indol-3-yl)glycerol 3-phosphate + L-serine = D-glyceraldehyde 3-phosphate + L-tryptophan + H2O. It functions in the pathway amino-acid biosynthesis; L-tryptophan biosynthesis; L-tryptophan from chorismate: step 5/5. The beta subunit is responsible for the synthesis of L-tryptophan from indole and L-serine. In Methylorubrum populi (strain ATCC BAA-705 / NCIMB 13946 / BJ001) (Methylobacterium populi), this protein is Tryptophan synthase beta chain.